The following is a 212-amino-acid chain: MTIGLVGRKVGMTRVFTEDGVSTPVTVIEVEANRVAQVKTVDNDGYSALQVTTGKRKASRVTKPAAGHFAKAGIEAGRGLWEFRLNENEGSDIEAGSEITVEVFNDTKLVDVTGTSKGKGFQGGIKRWNFTMQHATHGVSLSHRSNGSLGQCQTPGRVFKGKKMSGHMGAVRCTTQNLELVRVDAERNLLLIKGAVPGAINGNVIIKPAVKA.

At glutamine 153 the chain carries N5-methylglutamine.

The protein belongs to the universal ribosomal protein uL3 family. As to quaternary structure, part of the 50S ribosomal subunit. Forms a cluster with proteins L14 and L19. Post-translationally, methylated by PrmB.

One of the primary rRNA binding proteins, it binds directly near the 3'-end of the 23S rRNA, where it nucleates assembly of the 50S subunit. The polypeptide is Large ribosomal subunit protein uL3 (Colwellia psychrerythraea (strain 34H / ATCC BAA-681) (Vibrio psychroerythus)).